A 252-amino-acid chain; its full sequence is NAD-dependent protein deacetylase (252 aa).

Positions 1–248 constitute a Deacetylase sirtuin-type domain; it reads MYLVEEAKKV…PEVISHIQSL (248 aa). Residues Ala-26, Thr-30, Phe-37, Arg-38, Gln-102, Val-104, Asp-105, and His-120 each coordinate NAD(+). Nicotinamide is bound at residue Phe-37. 2 residues coordinate nicotinamide: Val-104 and Asp-105. His-120 acts as the Proton acceptor in catalysis. Positions 128, 131, 153, and 155 each coordinate Zn(2+). NAD(+)-binding residues include Ser-191, Ser-192, Asn-216, and Ile-234.

It belongs to the sirtuin family. Class U subfamily. The cofactor is Zn(2+).

It localises to the cytoplasm. The catalysed reaction is N(6)-acetyl-L-lysyl-[protein] + NAD(+) + H2O = 2''-O-acetyl-ADP-D-ribose + nicotinamide + L-lysyl-[protein]. NAD-dependent protein deacetylase which modulates the activities of several enzymes which are inactive in their acetylated form. Deacetylates the N-terminal lysine residue of Alba, the major archaeal chromatin protein and that, in turn, increases Alba's DNA binding affinity, thereby repressing transcription. The chain is NAD-dependent protein deacetylase from Sulfolobus acidocaldarius (strain ATCC 33909 / DSM 639 / JCM 8929 / NBRC 15157 / NCIMB 11770).